The following is a 375-amino-acid chain: Putative glutamate--cysteine ligase 2 (375 aa).

The protein belongs to the glutamate--cysteine ligase type 2 family. YbdK subfamily.

It carries out the reaction L-cysteine + L-glutamate + ATP = gamma-L-glutamyl-L-cysteine + ADP + phosphate + H(+). Functionally, ATP-dependent carboxylate-amine ligase which exhibits weak glutamate--cysteine ligase activity. The sequence is that of Putative glutamate--cysteine ligase 2 from Sorangium cellulosum (strain So ce56) (Polyangium cellulosum (strain So ce56)).